Reading from the N-terminus, the 538-residue chain is Syncytin-2 (538 aa).

The first 15 residues, 1 to 15 (MGLLLLVLILTPLLA), serve as a signal peptide directing secretion. Residues 16-478 (AHRHPDFPLL…GWLNWEGTWK (463 aa)) are Extracellular-facing. The short motif at 43 to 46 (CWLC) is the CXXC element. 3 disulfide bridges follow: Cys43-Cys46, Cys43-Cys439, and Cys431-Cys438. 8 N-linked (GlcNAc...) asparagine glycosylation sites follow: Asn133, Asn146, Asn177, Asn220, Asn241, Asn247, Asn312, and Asn332. Residues 354-374 (FIPLLAGLGIIAGTGTGIAGI) form a fusion peptide region. Positions 414 to 430 (LQNRRGLDMLTAAQGGI) match the CKS-17 motif. A CX6CC motif is present at residues 431-439 (CLALDEKCC). Asn443 carries N-linked (GlcNAc...) asparagine glycosylation. The helical transmembrane segment at 479–499 (WFSWVLPFTGPLVSLLLLLLF) threads the bilayer. The Cytoplasmic segment spans residues 500 to 538 (GPCLLNLITQFVLSRLQAIKLQTNLSAGCRPHNIQESPF).

Belongs to the gamma type-C retroviral envelope protein family. HERV class-I FRD env subfamily. The surface and transmembrane proteins form a heterodimer. They are attached by non-covalent interactions or by a labile interchain disulfide bond. In terms of processing, specific enzymatic cleavages in vivo yield the mature SU and TM proteins. Post-translationally, the CXXC motif is highly conserved across a broad range of retroviral envelope proteins. It is thought to participate in the formation of a labile disulfide bond possibly with the CX6CC motif present in the transmembrane protein.

Its subcellular location is the virion. The protein localises to the cell membrane. In terms of biological role, this endogenous retroviral envelope protein has retained its original fusogenic properties and participates in trophoblast fusion and the formation of a syncytium during placenta morphogenesis. The interaction with MFSD2A is apparently important for this process. Its function is as follows. Endogenous envelope proteins may have kept, lost or modified their original function during evolution but this one can still make pseudotypes with MLV, HIV-1 or SIV-1 virions and confer infectivity. Retroviral envelope proteins mediate receptor recognition and membrane fusion during early infection. The surface protein mediates receptor recognition, while the transmembrane protein anchors the envelope heterodimer to the viral membrane through one transmembrane domain. The other hydrophobic domain, called fusion peptide, mediates fusion of the viral membrane with the target cell membrane. The polypeptide is Syncytin-2 (ERVFRD-1) (Pongo pygmaeus (Bornean orangutan)).